A 224-amino-acid polypeptide reads, in one-letter code: 7-cyano-7-deazaguanine synthase (224 aa).

12–22 (LSGGLDSSTVT) contacts ATP. Zn(2+) is bound by residues C193, C201, C204, and C207.

Belongs to the QueC family. The cofactor is Zn(2+).

The enzyme catalyses 7-carboxy-7-deazaguanine + NH4(+) + ATP = 7-cyano-7-deazaguanine + ADP + phosphate + H2O + H(+). It participates in purine metabolism; 7-cyano-7-deazaguanine biosynthesis. Functionally, catalyzes the ATP-dependent conversion of 7-carboxy-7-deazaguanine (CDG) to 7-cyano-7-deazaguanine (preQ(0)). The polypeptide is 7-cyano-7-deazaguanine synthase (Prochlorococcus marinus subsp. pastoris (strain CCMP1986 / NIES-2087 / MED4)).